The sequence spans 300 residues: Glutamyl-Q tRNA(Asp) synthetase (300 aa).

L-glutamate contacts are provided by residues 14 to 18 (RFAPT) and Glu-50. Residues 17 to 27 (PTPSGFLHFGS) carry the 'HIGH' region motif. Residues Cys-106, Cys-108, Tyr-120, and Cys-124 each coordinate Zn(2+). 2 residues coordinate L-glutamate: Tyr-177 and Arg-195. The 'KMSKS' region signature appears at 233-237 (KLGKS). Position 236 (Lys-236) interacts with ATP.

The protein belongs to the class-I aminoacyl-tRNA synthetase family. GluQ subfamily. Requires Zn(2+) as cofactor.

Its function is as follows. Catalyzes the tRNA-independent activation of glutamate in presence of ATP and the subsequent transfer of glutamate onto a tRNA(Asp). Glutamate is transferred on the 2-amino-5-(4,5-dihydroxy-2-cyclopenten-1-yl) moiety of the queuosine in the wobble position of the QUC anticodon. The protein is Glutamyl-Q tRNA(Asp) synthetase of Pseudomonas putida (strain ATCC 700007 / DSM 6899 / JCM 31910 / BCRC 17059 / LMG 24140 / F1).